The sequence spans 159 residues: Phosphopantetheine adenylyltransferase (159 aa).

Threonine 8 provides a ligand contact to substrate. Residues threonine 8 to phenylalanine 9 and histidine 16 contribute to the ATP site. Substrate is bound by residues lysine 40, threonine 72, and arginine 86. Residues glycine 87 to arginine 89, glutamate 97, and tyrosine 122 to serine 128 contribute to the ATP site.

This sequence belongs to the bacterial CoaD family. In terms of assembly, homohexamer. Mg(2+) is required as a cofactor.

It localises to the cytoplasm. The catalysed reaction is (R)-4'-phosphopantetheine + ATP + H(+) = 3'-dephospho-CoA + diphosphate. Its pathway is cofactor biosynthesis; coenzyme A biosynthesis; CoA from (R)-pantothenate: step 4/5. Reversibly transfers an adenylyl group from ATP to 4'-phosphopantetheine, yielding dephospho-CoA (dPCoA) and pyrophosphate. The protein is Phosphopantetheine adenylyltransferase of Prochlorococcus marinus subsp. pastoris (strain CCMP1986 / NIES-2087 / MED4).